Reading from the N-terminus, the 580-residue chain is Negative elongation factor B (580 aa).

N6-acetyllysine is present on K519. Residues D552–L580 form a disordered region. At S557 the chain carries Phosphoserine.

Belongs to the NELF-B family. The NELF complex is composed of NELFA, NELFB, NELFCD and NELFE; the N-terminus of NELFB binds to the NELFA:NELFCD subcomplex. Binds RNA which may help to stabilize the NELF complex on nucleic acid Interacts with the first BRCT repeat of BRCA1. Interacts with KIAA1191. Isoform 1 and isoform 2 interact with NELFA, NELFCD and NELFE. As to expression, isoform 1 is expressed in the kidney, liver, adipose and lung. Isoform 2 is widely expressed.

The protein localises to the nucleus. Essential component of the NELF complex, a complex that negatively regulates the elongation of transcription by RNA polymerase II (Pol II). The NELF complex, which acts via an association with the DSIF complex and causes transcriptional pausing, is counteracted by the P-TEFb kinase complex. May be able to induce chromatin unfolding. Essential for early embryogenesis; plays an important role in maintaining the undifferentiated state of embryonic stem cells (ESCs) by preventing unscheduled expression of developmental genes. Plays a key role in establishing the responsiveness of stem cells to developmental cues; facilitates plasticity and cell fate commitment in ESCs by establishing the appropriate expression level of signaling molecules. Supports the transcription of genes involved in energy metabolism in cardiomyocytes; facilitates the association of transcription initiation factors with the promoters of the metabolism-related genes. This is Negative elongation factor B (Nelfb) from Mus musculus (Mouse).